The primary structure comprises 4128 residues: DNA-dependent protein kinase catalytic subunit (4128 aa).

Residue lysine 117 is modified to N6-acetyllysine. The HEAT 1 repeat unit spans residues 288 to 323 (DNYVSLFEVLLKWCAHTNVELKKAALSALESFLKQV). Phosphoserine occurs at positions 511 and 687. An N6-acetyllysine modification is found at lysine 828. 2 positions are modified to phosphoserine: serine 841 and serine 893. The stretch at 1004–1040 (QDTVALLEAILDGIVDPVDSTLRDFCGRCIREFLKWS) is one HEAT 2 repeat. A Phosphoserine modification is found at serine 1065. Residue lysine 1209 is modified to N6-acetyllysine. The interaction with C1D stretch occupies residues 1503 to 1538 (LDLSCKQLASGLLELAFAFGGLCERLVSLLLNPAVL). The segment at 1503 to 1538 (LDLSCKQLASGLLELAFAFGGLCERLVSLLLNPAVL) is leucine-zipper. A TPR 1 repeat occupies 1723–1756 (PMQSREFPPGTPRFNNYVDCMKKFLDALELSQSP). Lysine 1970 carries the post-translational modification N6-acetyllysine. The interval 2050-2073 (QSYSYSSQDPRPATGRFRRREQRD) is disordered. Serine 2056 bears the Phosphoserine; by autocatalysis mark. Lysine 2259 carries the post-translational modification N6-acetyllysine. The segment at 2436-3212 (LDIIYKMMPK…DNSMNVDQDG (777 aa)) is KIP-binding. The residue at position 2535 (threonine 2535) is a Phosphothreonine. Threonine 2609 carries the post-translational modification Phosphothreonine; by autocatalysis. Serine 2612 carries the phosphoserine; by autocatalysis modification. 2 positions are modified to phosphothreonine; by autocatalysis: threonine 2638 and threonine 2647. Residues 2737-2765 (EKLSLMYARKGVAEQKREKEIKSELKMKQ) form a may split the end of the DNA molecule, with the two strands separating around the region region. Position 2789 is a phosphoserine (serine 2789). Positions 2906–3539 (PAKRVRGKAR…VYPFIISSES (634 aa)) constitute an FAT domain. TPR repeat units lie at residues 2920 to 2948 (VLRW…SEIG) and 2949 to 2982 (TKQI…QDWV). Residues 3200-3222 (LPEDNSMNVDQDGDPSDRMEVQE) form a disordered region. Position 3205 is a phosphoserine (serine 3205). Residues lysine 3241, lysine 3260, lysine 3621, lysine 3638, and lysine 3642 each carry the N6-acetyllysine modification. A PI3K/PI4K catalytic domain is found at 3722 to 4053 (FDERVTVMAS…ICYAKRKLAG (332 aa)). The G-loop stretch occupies residues 3728–3734 (VMASLRR). A phosphoserine mark is found at serine 3731 and serine 3821. The interval 3919–3927 (GIGDRHLNN) is catalytic loop. The interval 3939-3964 (GIDFGHAFGSATQFLPVPELMPFRLT) is activation loop. Serine 4026 carries the phosphoserine modification. Residues 4096-4128 (SGLSEETQVKCLMDQATDPNILGRTWEGWEPWM) enclose the FATC domain.

This sequence belongs to the PI3/PI4-kinase family. DNA-PK is a heterotrimer of PRKDC and the Ku dimer (composed of XRCC6/Ku70 and XRCC5/Ku86). Formation of this complex may be promoted by interaction with ILF3. Component of the core long-range non-homologous end joining (NHEJ) complex (also named DNA-PK complex) composed of PRKDC, LIG4, XRCC4, XRCC6/Ku70, XRCC5/Ku86 and NHEJ1/XLF. Additional component of the NHEJ complex includes PAXX. Following autophosphorylation, PRKDC dissociates from DNA. Interacts with DNA-PKcs-interacting protein (KIP) with the region upstream the kinase domain. PRKDC alone also interacts with and phosphorylates DCLRE1C, thereby activating the latent endonuclease activity of this protein. Interacts with C1D. Interacts with TTI1 and TELO2. Interacts with CIB1. Interacts with SETX. Interacts with NR4A3; the DNA-dependent protein kinase complex DNA-PK phosphorylates and activates NR4A3 and prevents NR4A3 ubiquitination and degradation. Interacts with BRAT1. Part of the HDP-RNP complex composed of at least HEXIM1, PRKDC, XRCC5, XRCC6, paraspeckle proteins (SFPQ, NONO, PSPC1, RBM14, and MATR3) and NEAT1 RNA. Interacts with KAT5. Post-translationally, autophosphorylated at two clusters, the T2609 cluster and the S2056 cluster. Autophosphorylated on Ser-2056, Thr-2609, Thr-2638 and Thr-2647. Ser-2056 and Thr-2609 are DNA damage-inducible phosphorylation sites (inducible with ionizing radiation, IR) dephosphorylated by PPP5C. Autophosphorylation induces a conformational change that leads to remodeling of the DNA-PK complex, requisite for efficient end processing and DNA repair. Autophosphorylation in trans within DNA-PK complexes loaded on DNA ends leads to the dissociation of PRKDC from DNA and the transition into the short-range NHEJ complex. Autophosphorylation of the T2609 cluster is required for hematopoietic development and protein synthesis in erythrocytes precursors. In terms of processing, S-nitrosylated by GAPDH. Polyubiquitinated by RNF144A, leading to proteasomal degradation.

It is found in the nucleus. The protein resides in the nucleolus. Its subcellular location is the cytoplasm. It localises to the cytosol. It carries out the reaction L-seryl-[protein] + ATP = O-phospho-L-seryl-[protein] + ADP + H(+). It catalyses the reaction L-threonyl-[protein] + ATP = O-phospho-L-threonyl-[protein] + ADP + H(+). With respect to regulation, activity seems to be attenuated by autophosphorylation. Binding to the SL1 region of U3 small nucleolar RNA promotes auto-phosphorylation activity. Inhibited by wortmannin. Serine/threonine-protein kinase that acts as a molecular sensor for DNA damage. Involved in DNA non-homologous end joining (NHEJ) required for double-strand break (DSB) repair and V(D)J recombination. Must be bound to DNA to express its catalytic properties. Promotes processing of hairpin DNA structures in V(D)J recombination by activation of the hairpin endonuclease artemis (DCLRE1C). Recruited by XRCC5 and XRCC6 to DNA ends and is required to (1) protect and align broken ends of DNA, thereby preventing their degradation, (2) and sequester the DSB for repair by NHEJ. Acts as a scaffold protein to aid the localization of DNA repair proteins to the site of damage. The assembly of the DNA-PK complex at DNA ends is also required for the NHEJ ligation step. Found at the ends of chromosomes, suggesting a further role in the maintenance of telomeric stability and the prevention of chromosomal end fusion. Also involved in modulation of transcription. As part of the DNA-PK complex, involved in the early steps of ribosome assembly by promoting the processing of precursor rRNA into mature 18S rRNA in the small-subunit processome. Binding to U3 small nucleolar RNA, recruits PRKDC and XRCC5/Ku86 to the small-subunit processome. Recognizes the substrate consensus sequence [ST]-Q. Phosphorylates 'Ser-139' of histone variant H2AX, thereby regulating DNA damage response mechanism. Phosphorylates ASF1A, DCLRE1C, c-Abl/ABL1, histone H1, HSPCA, c-jun/JUN, p53/TP53, PARP1, POU2F1, DHX9, FH, SRF, NHEJ1/XLF, XRCC1, XRCC4, XRCC5, XRCC6, WRN, MYC and RFA2. Can phosphorylate C1D not only in the presence of linear DNA but also in the presence of supercoiled DNA. Ability to phosphorylate p53/TP53 in the presence of supercoiled DNA is dependent on C1D. Acts as a regulator of the phosphatidylinositol 3-kinase/protein kinase B signal transduction by mediating phosphorylation of 'Ser-473' of protein kinase B (PKB/AKT1, PKB/AKT2, PKB/AKT3), promoting their activation. Contributes to the determination of the circadian period length by antagonizing phosphorylation of CRY1 'Ser-588' and increasing CRY1 protein stability, most likely through an indirect mechanism. Plays a role in the regulation of DNA virus-mediated innate immune response by assembling into the HDP-RNP complex, a complex that serves as a platform for IRF3 phosphorylation and subsequent innate immune response activation through the cGAS-STING pathway. Also regulates the cGAS-STING pathway by catalyzing phosphorylation of CGAS, thereby impairing CGAS oligomerization and activation. Also regulates the cGAS-STING pathway by mediating phosphorylation of PARP1. In Homo sapiens (Human), this protein is DNA-dependent protein kinase catalytic subunit (PRKDC).